A 557-amino-acid chain; its full sequence is Dihydroxy-acid dehydratase (557 aa).

Cys-50 serves as a coordination point for [2Fe-2S] cluster. Asp-82 serves as a coordination point for Mg(2+). [2Fe-2S] cluster is bound at residue Cys-123. Mg(2+)-binding residues include Asp-124 and Lys-125. At Lys-125 the chain carries N6-carboxylysine. Cys-195 contributes to the [2Fe-2S] cluster binding site. Residue Glu-447 coordinates Mg(2+). The Proton acceptor role is filled by Ser-473.

It belongs to the IlvD/Edd family. In terms of assembly, homodimer. [2Fe-2S] cluster serves as cofactor. It depends on Mg(2+) as a cofactor.

It carries out the reaction (2R)-2,3-dihydroxy-3-methylbutanoate = 3-methyl-2-oxobutanoate + H2O. It catalyses the reaction (2R,3R)-2,3-dihydroxy-3-methylpentanoate = (S)-3-methyl-2-oxopentanoate + H2O. The protein operates within amino-acid biosynthesis; L-isoleucine biosynthesis; L-isoleucine from 2-oxobutanoate: step 3/4. It functions in the pathway amino-acid biosynthesis; L-valine biosynthesis; L-valine from pyruvate: step 3/4. In terms of biological role, functions in the biosynthesis of branched-chain amino acids. Catalyzes the dehydration of (2R,3R)-2,3-dihydroxy-3-methylpentanoate (2,3-dihydroxy-3-methylvalerate) into 2-oxo-3-methylpentanoate (2-oxo-3-methylvalerate) and of (2R)-2,3-dihydroxy-3-methylbutanoate (2,3-dihydroxyisovalerate) into 2-oxo-3-methylbutanoate (2-oxoisovalerate), the penultimate precursor to L-isoleucine and L-valine, respectively. This Nitrosomonas eutropha (strain DSM 101675 / C91 / Nm57) protein is Dihydroxy-acid dehydratase.